The primary structure comprises 382 residues: Putative NADPH dehydrogenase C5H10.04 (382 aa).

Residues threonine 28 and histidine 189 each contribute to the FMN site. Substrate is bound by residues histidine 189 and asparagine 192. The FMN site is built by arginine 242 and arginine 334. Tyrosine 361 lines the substrate pocket.

Belongs to the NADH:flavin oxidoreductase/NADH oxidase family. Homodimer or heterodimer. The cofactor is FMN.

The enzyme catalyses A + NADPH + H(+) = AH2 + NADP(+). The sequence is that of Putative NADPH dehydrogenase C5H10.04 from Schizosaccharomyces pombe (strain 972 / ATCC 24843) (Fission yeast).